Consider the following 634-residue polypeptide: uncharacterized protein (634 aa).

A signal peptide spans 1–40 (MWLQQRLKGLPGLLSSSWARRLLCLLGLLVLLLWFAGSGA). Residues 41 to 589 (RRAAGGLQLL…DEHMAQQDPG (549 aa)) are Extracellular-facing. An N-linked (GlcNAc...) asparagine glycan is attached at N363. Residues 590–610 (LPFLFWFSVASLITLFHLFLF) traverse the membrane as a helical segment. The Cytoplasmic segment spans residues 611–634 (KLIYNEYCGPGAKPFFRNKEDPSV).

Its subcellular location is the membrane. This is an uncharacterized protein from Bos taurus (Bovine).